Consider the following 56-residue polypeptide: Male-specific sperm protein Mst87F (56 aa).

It belongs to the MST(3)CGP family. Testis.

The polypeptide is Male-specific sperm protein Mst87F (Mst87F) (Drosophila melanogaster (Fruit fly)).